A 429-amino-acid chain; its full sequence is Protein ORF66 (429 aa).

Belongs to the herpesviridae UL49 family. As to quaternary structure, interacts with ORF34.

The protein resides in the host nucleus. It is found in the host cytoplasm. Its function is as follows. Participates in the expression of late viral mRNAs. The chain is Protein ORF66 (ORF66) from Homo sapiens (Human).